Consider the following 174-residue polypeptide: Gamma-crystallin D (174 aa).

2 Beta/gamma crystallin 'Greek key' domains span residues 2-40 and 41-83; these read GKIT…RVDS and GCWM…RLIP. A connecting peptide region spans residues 84-87; that stretch reads HSGS. Beta/gamma crystallin 'Greek key' domains are found at residues 88 to 128 and 129 to 171; these read HRIR…NVLE and GSWV…RRVI.

This sequence belongs to the beta/gamma-crystallin family. As to quaternary structure, monomer.

Functionally, crystallins are the dominant structural components of the vertebrate eye lens. The chain is Gamma-crystallin D (CRYGD) from Homo sapiens (Human).